Consider the following 118-residue polypeptide: MIYGIGIDITNIDRFKTLHNPATFIQKVLTPTEFDEFEAKKGQRAYEFLAGHFSVKESYSKAYGTGLGKKLNFQDIEINYDGVGKPKIVKHPFSGTVHVSISHSDHHVVTQVILEGDN.

Mg(2+) is bound by residues Asp-8 and Glu-57.

Belongs to the P-Pant transferase superfamily. AcpS family. Mg(2+) is required as a cofactor.

The protein resides in the cytoplasm. It catalyses the reaction apo-[ACP] + CoA = holo-[ACP] + adenosine 3',5'-bisphosphate + H(+). Transfers the 4'-phosphopantetheine moiety from coenzyme A to a Ser of acyl-carrier-protein. This Pediococcus pentosaceus (strain ATCC 25745 / CCUG 21536 / LMG 10740 / 183-1w) protein is Holo-[acyl-carrier-protein] synthase.